A 533-amino-acid polypeptide reads, in one-letter code: Protein translocase subunit SecD (533 aa).

The next 6 helical transmembrane spans lie at 8–28, 377–397, 400–420, 422–442, 469–489, and 495–515; these read ALLVVVVLIVGVVYLVPTFVS, IVGGIGTILFMLIYYRFGGVV, LALALNVLLVLAGMAAFGFTL, LPGIAGIALTIGMAVDANVLI, LTILDANVTTIIAALVLLQFG, and GFAVTLTVGLAANMFTAIFVT.

It belongs to the SecD/SecF family. SecD subfamily. In terms of assembly, forms a complex with SecF. Part of the essential Sec protein translocation apparatus which comprises SecA, SecYEG and auxiliary proteins SecDF-YajC and YidC.

It is found in the cell inner membrane. Its function is as follows. Part of the Sec protein translocase complex. Interacts with the SecYEG preprotein conducting channel. SecDF uses the proton motive force (PMF) to complete protein translocation after the ATP-dependent function of SecA. The chain is Protein translocase subunit SecD from Syntrophobacter fumaroxidans (strain DSM 10017 / MPOB).